Consider the following 110-residue polypeptide: uncharacterized protein (110 aa).

This is an uncharacterized protein from Homo sapiens (Human).